Here is a 620-residue protein sequence, read N- to C-terminus: 1-deoxy-D-xylulose-5-phosphate synthase (620 aa).

Thiamine diphosphate contacts are provided by residues His-75 and 116 to 118 (AHS). Asp-147 serves as a coordination point for Mg(2+). Thiamine diphosphate contacts are provided by residues 148-149 (GA), Asn-177, Tyr-284, and Glu-366. A Mg(2+)-binding site is contributed by Asn-177.

This sequence belongs to the transketolase family. DXPS subfamily. In terms of assembly, homodimer. Mg(2+) is required as a cofactor. Thiamine diphosphate serves as cofactor.

The enzyme catalyses D-glyceraldehyde 3-phosphate + pyruvate + H(+) = 1-deoxy-D-xylulose 5-phosphate + CO2. The protein operates within metabolic intermediate biosynthesis; 1-deoxy-D-xylulose 5-phosphate biosynthesis; 1-deoxy-D-xylulose 5-phosphate from D-glyceraldehyde 3-phosphate and pyruvate: step 1/1. Functionally, catalyzes the acyloin condensation reaction between C atoms 2 and 3 of pyruvate and glyceraldehyde 3-phosphate to yield 1-deoxy-D-xylulose-5-phosphate (DXP). The protein is 1-deoxy-D-xylulose-5-phosphate synthase of Bordetella bronchiseptica (strain ATCC BAA-588 / NCTC 13252 / RB50) (Alcaligenes bronchisepticus).